The primary structure comprises 400 residues: Dihydrolipoyllysine-residue succinyltransferase component of 2-oxoglutarate dehydrogenase complex (400 aa).

The 76-residue stretch at 2-77 (GVKIIVPSLG…AVGEEIGDIN (76 aa)) folds into the Lipoyl-binding domain. At lysine 43 the chain carries N6-lipoyllysine. The segment covering 85 to 97 (NSNEAAKPQTASQ) has biased composition (polar residues). Residues 85–113 (NSNEAAKPQTASQPVPEKVPKKPAVANNT) form a disordered region. The 38-residue stretch at 113 to 150 (TLAPSVQKLVTENKLDPNNIKGTGKDGRITKGDVLETM) folds into the Peripheral subunit-binding (PSBD) domain. Catalysis depends on residues histidine 371 and aspartate 375.

Belongs to the 2-oxoacid dehydrogenase family. In terms of assembly, forms a 24-polypeptide structural core with octahedral symmetry. Part of the 2-oxoglutarate dehydrogenase (OGDH) complex composed of E1 (2-oxoglutarate dehydrogenase), E2 (dihydrolipoamide succinyltransferase) and E3 (dihydrolipoamide dehydrogenase); the complex contains multiple copies of the three enzymatic components (E1, E2 and E3). (R)-lipoate is required as a cofactor.

The catalysed reaction is N(6)-[(R)-dihydrolipoyl]-L-lysyl-[protein] + succinyl-CoA = N(6)-[(R)-S(8)-succinyldihydrolipoyl]-L-lysyl-[protein] + CoA. Its pathway is amino-acid degradation; L-lysine degradation via saccharopine pathway; glutaryl-CoA from L-lysine: step 6/6. E2 component of the 2-oxoglutarate dehydrogenase (OGDH) complex which catalyzes the second step in the conversion of 2-oxoglutarate to succinyl-CoA and CO(2). The protein is Dihydrolipoyllysine-residue succinyltransferase component of 2-oxoglutarate dehydrogenase complex (sucB) of Rickettsia bellii (strain RML369-C).